An 87-amino-acid chain; its full sequence is Defensin-like protein 81 (87 aa).

An N-terminal signal peptide occupies residues 1–27 (MTIKKFLPLLLSSLMVYSLILLPIISG). 4 disulfides stabilise this stretch: C33-C69, C37-C57, C43-C67, and C47-C68.

This sequence belongs to the DEFL family.

The protein resides in the secreted. The protein is Defensin-like protein 81 of Arabidopsis thaliana (Mouse-ear cress).